The primary structure comprises 513 residues: Varicidin biosynthesis cluster-specific transcription factor (513 aa).

The zn(2)-C6 fungal-type DNA-binding region spans 16 to 54 (CERCRLHKLKCTILPQKRFEGPQEAPEQCTRCARAKAKC). 2 disordered regions span residues 58 to 92 (RRAP…MQPN) and 97 to 116 (VSSH…SSLK). Over residues 67-76 (SSSNDRSSVS) the composition is skewed to low complexity. Residues 77–92 (KGINSTTPATRTMQPN) are compositionally biased toward polar residues.

The protein localises to the nucleus. Transcription factor that regulates the expression of the gene cluster that mediates the biosynthesis of varicidin A, an antifungal natural product containing a cis-octahydrodecalin core. The protein is Varicidin biosynthesis cluster-specific transcription factor of Talaromyces variabilis (Penicillium variabile).